The chain runs to 288 residues: Acetyl-coenzyme A carboxylase carboxyl transferase subunit beta (288 aa).

The CoA carboxyltransferase N-terminal domain maps to 34–288 (LFSKCPACKV…RLLRMHGGVR (255 aa)). Zn(2+) is bound by residues cysteine 38, cysteine 41, cysteine 56, and cysteine 59. The segment at 38–59 (CPACKVILYKNDLGLEKTCQHC) adopts a C4-type zinc-finger fold.

Belongs to the AccD/PCCB family. Acetyl-CoA carboxylase is a heterohexamer composed of biotin carboxyl carrier protein (AccB), biotin carboxylase (AccC) and two subunits each of ACCase subunit alpha (AccA) and ACCase subunit beta (AccD). Zn(2+) serves as cofactor.

It is found in the cytoplasm. It catalyses the reaction N(6)-carboxybiotinyl-L-lysyl-[protein] + acetyl-CoA = N(6)-biotinyl-L-lysyl-[protein] + malonyl-CoA. Its pathway is lipid metabolism; malonyl-CoA biosynthesis; malonyl-CoA from acetyl-CoA: step 1/1. In terms of biological role, component of the acetyl coenzyme A carboxylase (ACC) complex. Biotin carboxylase (BC) catalyzes the carboxylation of biotin on its carrier protein (BCCP) and then the CO(2) group is transferred by the transcarboxylase to acetyl-CoA to form malonyl-CoA. This Streptococcus suis (strain 98HAH33) protein is Acetyl-coenzyme A carboxylase carboxyl transferase subunit beta.